Consider the following 860-residue polypeptide: MQEQYRPEEIEADVQLHWQEKQTFKVTEQLGKEKYYCLSMLPYPSGRLHMGHVRNYTIGDVISRYQRMLGKNVLQPIGWDAFGLPAEGAAVKNNTAPAPWTYANIDYMKNQLKLLGFGYDWDREIATCKPDYYRWEQWFFTKLYEKGLVYKKTSAVNWCPNDQTVLANEQVIDGCCWRCDTKVERKEIPQWFIKITAYADQLLNDLDTLESWPEQVKTMQRNWIGRSEGVEITFDVADSEEKLSVYTTRPDTFMGVTYVAVAAGHPLAAQAAVTNPALADFIAECRNTKVAEADMATMEKKGMATGLYAIHPLNGEKVAIWVANFVLMEYGTGAVMAVPGHDQRDWEFATKYDLSIKPVILNADGSEPDLSAQAMTEKGSLFNSGEFDGLDFEAGFNAIADKLVEKGIGERKVNYRLRDWGVSRQRYWGAPIPMMTLEDGTVIPTPEDQLPVILPEDVVMDGITSPLKSNPEWAKTTVNGQPALRETDTFDTFMESSWYYARYTCPQYDQGMLDPAAANYWLPVDQYVGGIEHAIMHLMYFRFFHKLMRDAGLVTSDEPAKRLLCQGMVLADAFYYLGNNGERIWVSPTDVTVERDEKGRIVKATDNEGRDVVYAGMSKMSKSKNNGIDPQIMVEKYGADTVRLFMMFASPAEMTLEWQESGVEGANRFLKRVWRQAFEHTGKGAVTALDITTLTEDQKSLRRDLHKTIAKVTDDIGRRQTFNTAIAAIMELMNKLAKAPQESDQDRALTQETLLAVVRMLYPFTPHVCFTLWQALQGEGDVDTAPWPVADENAMVEDSKLVVVQVNGKVRGKITVAADASEEQVRERAAQEPLVAKYLDGVTVRKVIYVPGKLLNLVVG.

Positions 42–52 (PYPSGRLHMGH) match the 'HIGH' region motif. Residues 619-623 (KMSKS) carry the 'KMSKS' region motif. K622 is a binding site for ATP.

The protein belongs to the class-I aminoacyl-tRNA synthetase family.

It localises to the cytoplasm. It carries out the reaction tRNA(Leu) + L-leucine + ATP = L-leucyl-tRNA(Leu) + AMP + diphosphate. This Pectobacterium atrosepticum (strain SCRI 1043 / ATCC BAA-672) (Erwinia carotovora subsp. atroseptica) protein is Leucine--tRNA ligase.